The primary structure comprises 478 residues: Mannose-1-phosphate guanylyltransferase (478 aa).

Belongs to the mannose-6-phosphate isomerase type 2 family.

It carries out the reaction alpha-D-mannose 1-phosphate + GTP + H(+) = GDP-alpha-D-mannose + diphosphate. It participates in nucleotide-sugar biosynthesis; GDP-alpha-D-mannose biosynthesis; GDP-alpha-D-mannose from alpha-D-mannose 1-phosphate (GTP route): step 1/1. Functionally, involved in the biosynthesis of the capsular polysaccharide colanic acid. This chain is Mannose-1-phosphate guanylyltransferase (manC), found in Escherichia coli (strain K12).